We begin with the raw amino-acid sequence, 397 residues long: Elongation factor Tu 2 (397 aa).

The 197-residue stretch at 10–206 (KPHVNIGTIG…AIDTWIPEPV (197 aa)) folds into the tr-type G domain. The interval 19 to 26 (GHVDHGKT) is G1. 19–26 (GHVDHGKT) is a GTP binding site. Thr26 serves as a coordination point for Mg(2+). Positions 61 to 65 (GITIS) are G2. The interval 82 to 85 (DCPG) is G3. Residues 82–86 (DCPGH) and 137–140 (NKCD) each bind GTP. The G4 stretch occupies residues 137 to 140 (NKCD). The tract at residues 175 to 177 (SAL) is G5.

The protein belongs to the TRAFAC class translation factor GTPase superfamily. Classic translation factor GTPase family. EF-Tu/EF-1A subfamily. In terms of assembly, monomer.

Its subcellular location is the cytoplasm. It carries out the reaction GTP + H2O = GDP + phosphate + H(+). Functionally, GTP hydrolase that promotes the GTP-dependent binding of aminoacyl-tRNA to the A-site of ribosomes during protein biosynthesis. This chain is Elongation factor Tu 2, found in Alkaliphilus metalliredigens (strain QYMF).